Consider the following 311-residue polypeptide: Olfactory receptor 5M8 (311 aa).

Residues methionine 1 to isoleucine 24 are Extracellular-facing. Asparagine 4 carries N-linked (GlcNAc...) asparagine glycosylation. A helical membrane pass occupies residues leucine 25–isoleucine 45. The Cytoplasmic segment spans residues valine 46–tryptophan 53. Residues leucine 54–serine 74 traverse the membrane as a helical segment. The Extracellular segment spans residues asparagine 75–valine 98. Cysteine 96 and cysteine 188 are disulfide-bonded. A helical transmembrane segment spans residues glutamine 99–phenylalanine 119. The Cytoplasmic portion of the chain corresponds to aspartate 120–serine 138. The helical transmembrane segment at valine 139–threonine 159 threads the bilayer. Residues methionine 160–glutamate 195 are Extracellular-facing. Residues leucine 196–serine 216 traverse the membrane as a helical segment. Topologically, residues tyrosine 217–alanine 236 are cytoplasmic. The helical transmembrane segment at phenylalanine 237 to methionine 257 threads the bilayer. Over tyrosine 258–glycine 270 the chain is Extracellular. Residues lysine 271–leucine 291 form a helical membrane-spanning segment. The Cytoplasmic portion of the chain corresponds to arginine 292 to serine 311.

It belongs to the G-protein coupled receptor 1 family.

The protein localises to the cell membrane. Odorant receptor. The protein is Olfactory receptor 5M8 (OR5M8) of Homo sapiens (Human).